A 188-amino-acid polypeptide reads, in one-letter code: MSIKSDKWIRRMAQEHGMIEPFVERQVRGADSSRVISYGVSSYGYDVRCADEFKVFTNIHSAIVDPKNFDEKSFVDIKSDVCIIPPNSFALARTVEYFRIPRDVLTICLGKSTYARCGIIVNVTPLEPEWEGHVTLEFSNTTNLPAKIYANEGVAQMLFLQSDEACEVSYKDRGGKYQGQTGVTLPRT.

DCTP is bound by residues 111-116, 135-137, Gln156, Tyr170, and Gln180; these read KSTYAR and TLE. Residue Glu137 is the Proton donor/acceptor of the active site.

The protein belongs to the dCTP deaminase family. Homotrimer.

It carries out the reaction dCTP + H2O + H(+) = dUTP + NH4(+). It participates in pyrimidine metabolism; dUMP biosynthesis; dUMP from dCTP (dUTP route): step 1/2. Catalyzes the deamination of dCTP to dUTP. In Ectopseudomonas mendocina (strain ymp) (Pseudomonas mendocina), this protein is dCTP deaminase.